The sequence spans 281 residues: Shikimate dehydrogenase (NADP(+)) (281 aa).

Shikimate-binding positions include 15–17 (SKS) and T62. Catalysis depends on K66, which acts as the Proton acceptor. Residues N87 and D102 each contribute to the shikimate site. NADP(+)-binding positions include 127–131 (GAGGS), 151–156 (NRTPER), and L217. Position 219 (Y219) interacts with shikimate. G241 serves as a coordination point for NADP(+).

This sequence belongs to the shikimate dehydrogenase family. In terms of assembly, homodimer.

The catalysed reaction is shikimate + NADP(+) = 3-dehydroshikimate + NADPH + H(+). Its pathway is metabolic intermediate biosynthesis; chorismate biosynthesis; chorismate from D-erythrose 4-phosphate and phosphoenolpyruvate: step 4/7. Its function is as follows. Involved in the biosynthesis of the chorismate, which leads to the biosynthesis of aromatic amino acids. Catalyzes the reversible NADPH linked reduction of 3-dehydroshikimate (DHSA) to yield shikimate (SA). The chain is Shikimate dehydrogenase (NADP(+)) from Stenotrophomonas maltophilia (strain R551-3).